A 238-amino-acid polypeptide reads, in one-letter code: Probable transcriptional regulatory protein YeeN (238 aa).

The protein belongs to the TACO1 family. YeeN subfamily.

It is found in the cytoplasm. This chain is Probable transcriptional regulatory protein YeeN, found in Shigella flexneri.